The primary structure comprises 140 residues: Large ribosomal subunit protein uL13 (140 aa).

This sequence belongs to the universal ribosomal protein uL13 family. Part of the 50S ribosomal subunit.

This protein is one of the early assembly proteins of the 50S ribosomal subunit, although it is not seen to bind rRNA by itself. It is important during the early stages of 50S assembly. In Nautilia profundicola (strain ATCC BAA-1463 / DSM 18972 / AmH), this protein is Large ribosomal subunit protein uL13.